The sequence spans 83 residues: MKTLLLTLVVVTIVCLDLGYTRRCFNQQSSEPQTNKSCPPGENSCYNKQWRDHRGTIIERGCGCPQVKSGIKLTCCQSDDCNN.

The signal sequence occupies residues 1–21 (MKTLLLTLVVVTIVCLDLGYT). Cystine bridges form between Cys-24–Cys-45, Cys-38–Cys-62, Cys-64–Cys-75, and Cys-76–Cys-81.

It belongs to the three-finger toxin family. Short-chain subfamily. Type I alpha-neurotoxin sub-subfamily. In terms of tissue distribution, expressed by the venom gland.

It is found in the secreted. Its function is as follows. Binds to muscle nicotinic acetylcholine receptor (nAChR) and inhibit acetylcholine from binding to the receptor, thereby impairing neuromuscular transmission. The chain is Short neurotoxin VAN-29 from Laticauda laticaudata (Blue-ringed sea krait).